Consider the following 145-residue polypeptide: uncharacterized protein (145 aa).

Ser-67 bears the Phosphoserine mark.

As to expression, expressed in retina and retinoblastoma.

This is an uncharacterized protein from Homo sapiens (Human).